Reading from the N-terminus, the 276-residue chain is O-methyltransferase cnsE (276 aa).

S-adenosyl-L-methionine-binding positions include Gln-110, 133-134 (DA), and His-155.

It belongs to the methyltransferase superfamily. It depends on S-adenosyl-L-methionine as a cofactor.

It participates in alkaloid biosynthesis. In terms of biological role, O-methyltransferase; part of the gene cluster that mediates the biosynthesis of communesins, a prominent class of indole alkaloids with great potential as pharmaceuticals. Communesins are biosynthesized by the coupling of tryptamine and aurantioclavine, two building blocks derived from L-tryptophan. The L-tryptophan decarboxylase cnsB converts L-tryptophan to tryptamine, whereas the tryptophan dimethylallyltransferase cnsF converts L-tryptophan to 4-dimethylallyl tryptophan which is further transformed to aurantioclavine by the aurantioclavine synthase cnsA, probably aided by the catalase cnsD. The cytochrome P450 monooxygenase cnsC catalyzes the heterodimeric coupling between the two different indole moieties, tryptamine and aurantioclavine, to construct vicinal quaternary stereocenters and yield the heptacyclic communesin scaffold. The O-methyltransferase cnsE then methylates the communesin scaffold to produce communesin K, the simplest characterized communesin that contains the heptacyclic core. The dioxygenase cnsJ converts communesin K into communesin I. Acylation to introduce the hexadienyl group at position N16 of communesin I by the acyltransferase cnsK leads to the production of communesin B. The hexadienyl group is produced by the highly reducing polyketide synthase cnsI, before being hydrolytically removed from cnsI by the serine hydrolase cnsH, converted into hexadienyl-CoA by the CoA ligase cnsG, and then transferred to communesin I by cnsK. Surprisingly, cnsK may also be a promiscuous acyltransferase that can tolerate a range of acyl groups, including acetyl-, propionyl-, and butyryl-CoA, which lead to communesins A, G and H respectively. The roles of the alpha-ketoglutarate-dependent dioxygenases cnsM and cnsP have still to be determined. This Penicillium expansum (Blue mold rot fungus) protein is O-methyltransferase cnsE.